A 127-amino-acid chain; its full sequence is Large ribosomal subunit protein bL12 (127 aa).

This sequence belongs to the bacterial ribosomal protein bL12 family. As to quaternary structure, homodimer. Part of the ribosomal stalk of the 50S ribosomal subunit. Forms a multimeric L10(L12)X complex, where L10 forms an elongated spine to which 2 to 4 L12 dimers bind in a sequential fashion. Binds GTP-bound translation factors.

In terms of biological role, forms part of the ribosomal stalk which helps the ribosome interact with GTP-bound translation factors. Is thus essential for accurate translation. The protein is Large ribosomal subunit protein bL12 of Leptospira interrogans serogroup Icterohaemorrhagiae serovar copenhageni (strain Fiocruz L1-130).